A 181-amino-acid polypeptide reads, in one-letter code: NADH-quinone oxidoreductase subunit B (181 aa).

Residues Cys45, Cys46, Cys111, and Cys140 each coordinate [4Fe-4S] cluster.

The protein belongs to the complex I 20 kDa subunit family. In terms of assembly, NDH-1 is composed of 15 different subunits. Subunits NuoB, C, D, E, F, and G constitute the peripheral sector of the complex. [4Fe-4S] cluster serves as cofactor.

Its subcellular location is the cell membrane. The enzyme catalyses a quinone + NADH + 5 H(+)(in) = a quinol + NAD(+) + 4 H(+)(out). NDH-1 shuttles electrons from NADH, via FMN and iron-sulfur (Fe-S) centers, to quinones in the respiratory chain. The immediate electron acceptor for the enzyme in this species is believed to be a menaquinone. Couples the redox reaction to proton translocation (for every two electrons transferred, four hydrogen ions are translocated across the cytoplasmic membrane), and thus conserves the redox energy in a proton gradient. This is NADH-quinone oxidoreductase subunit B from Deinococcus radiodurans (strain ATCC 13939 / DSM 20539 / JCM 16871 / CCUG 27074 / LMG 4051 / NBRC 15346 / NCIMB 9279 / VKM B-1422 / R1).